The sequence spans 319 residues: GTP cyclohydrolase MptA (319 aa).

This sequence belongs to the GTP cyclohydrolase IV family. Homodimer. The cofactor is Fe(2+).

It catalyses the reaction GTP + H2O = 7,8-dihydroneopterin 2',3'-cyclic phosphate + formate + diphosphate + H(+). Its pathway is cofactor biosynthesis; 5,6,7,8-tetrahydromethanopterin biosynthesis. Converts GTP to 7,8-dihydro-D-neopterin 2',3'-cyclic phosphate, the first intermediate in the biosynthesis of coenzyme methanopterin. The chain is GTP cyclohydrolase MptA from Methanosarcina barkeri (strain Fusaro / DSM 804).